A 463-amino-acid chain; its full sequence is ATP synthase subunit beta (463 aa).

152-159 (GGAGVGKT) serves as a coordination point for ATP.

Belongs to the ATPase alpha/beta chains family. F-type ATPases have 2 components, CF(1) - the catalytic core - and CF(0) - the membrane proton channel. CF(1) has five subunits: alpha(3), beta(3), gamma(1), delta(1), epsilon(1). CF(0) has three main subunits: a(1), b(2) and c(9-12). The alpha and beta chains form an alternating ring which encloses part of the gamma chain. CF(1) is attached to CF(0) by a central stalk formed by the gamma and epsilon chains, while a peripheral stalk is formed by the delta and b chains.

The protein resides in the cell inner membrane. It carries out the reaction ATP + H2O + 4 H(+)(in) = ADP + phosphate + 5 H(+)(out). In terms of biological role, produces ATP from ADP in the presence of a proton gradient across the membrane. The catalytic sites are hosted primarily by the beta subunits. The polypeptide is ATP synthase subunit beta (Shewanella putrefaciens (strain CN-32 / ATCC BAA-453)).